Consider the following 179-residue polypeptide: Large ribosomal subunit protein uL6 (179 aa).

It belongs to the universal ribosomal protein uL6 family. In terms of assembly, part of the 50S ribosomal subunit.

Functionally, this protein binds to the 23S rRNA, and is important in its secondary structure. It is located near the subunit interface in the base of the L7/L12 stalk, and near the tRNA binding site of the peptidyltransferase center. This chain is Large ribosomal subunit protein uL6, found in Desulfovibrio desulfuricans (strain ATCC 27774 / DSM 6949 / MB).